A 1322-amino-acid polypeptide reads, in one-letter code: FERM and PDZ domain-containing protein 4 (1322 aa).

Positions Gln33 to Leu66 constitute a WW domain. The PDZ domain maps to Lys78–Tyr155. An FERM domain is found at Asn204–Arg519. Disordered stretches follow at residues Ala809–Val847, Ser900–Lys927, Glu952–Val983, Arg1027–Asn1080, Ser1105–Asp1148, Ala1160–Leu1180, and His1207–Ser1227. Over residues Glu902–Glu921 the composition is skewed to low complexity. Low complexity predominate over residues Asn1041–Thr1054. Residues Thr1067–Asn1080 are compositionally biased toward polar residues. Polar residues predominate over residues His1207–Ser1217.

Interacts (via C-terminus) with DLG1, DLG2, DLG3 and DLG4/PSD95. Interacts (via N-terminus) with ARHGEF7; the interaction is mediated by the PDZ domain. Interacts with GPSM2 (via TPR repeat region).

The protein localises to the cell projection. It localises to the dendritic spine. Its function is as follows. Positive regulator of dendritic spine morphogenesis and density. Required for the maintenance of excitatory synaptic transmission. Binds phosphatidylinositol 4,5-bisphosphate. The polypeptide is FERM and PDZ domain-containing protein 4 (FRMPD4) (Homo sapiens (Human)).